A 493-amino-acid polypeptide reads, in one-letter code: EGF-containing fibulin-like extracellular matrix protein 1 (493 aa).

An N-terminal signal peptide occupies residues 1 to 17; it reads MLKALFLTMLTLALVKS. In terms of domain architecture, EGF-like 1; atypical spans 26 to 71; sequence YTQCTDGYEWDPVRQQCKDIDECDIVPDACKGGMKCVNHYGGYLCL. Residues 173–213 enclose the EGF-like 2; calcium-binding domain; it reads DIDECTAGTHNCRADQVCINLRGSFACQCPPGYQKRGEQCV. 15 disulfide bridges follow: Cys-177–Cys-190, Cys-184–Cys-199, Cys-201–Cys-212, Cys-218–Cys-228, Cys-224–Cys-237, Cys-239–Cys-252, Cys-258–Cys-268, Cys-264–Cys-277, Cys-279–Cys-292, Cys-298–Cys-309, Cys-305–Cys-318, Cys-320–Cys-332, Cys-338–Cys-350, Cys-344–Cys-359, and Cys-365–Cys-377. The region spanning 214-253 is the EGF-like 3; calcium-binding domain; that stretch reads DIDECTIPPYCHQRCVNTPGSFYCQCSPGFQLAANNYTCV. An N-linked (GlcNAc...) asparagine glycan is attached at Asn-249. Residues 254–293 form the EGF-like 4; calcium-binding domain; it reads DINECDASNQCAQQCYNILGSFICQCNQGYELSSDRLNCE. A mediates interaction with TIMP3 region spans residues 259 to 493; sequence DASNQCAQQC…LTIIVGPFSF (235 aa). The EGF-like 5; calcium-binding domain maps to 294 to 333; sequence DIDECRTSSYLCQYQCVNEPGKFSCMCPQGYQVVRSRTCQ. The 45-residue stretch at 334 to 378 folds into the EGF-like 6; calcium-binding domain; it reads DINECETTNECREDEMCWNYHGGFRCYPRNPCQDPYILTPENRCV.

This sequence belongs to the fibulin family. As to quaternary structure, interacts with ECM1. Interacts with TIMP3.

The protein localises to the secreted. It localises to the extracellular space. The protein resides in the extracellular matrix. Its function is as follows. Binds EGFR, the EGF receptor, inducing EGFR autophosphorylation and the activation of downstream signaling pathways. May play a role in cell adhesion and migration. May function as a negative regulator of chondrocyte differentiation. In the olfactory epithelium, it may regulate glial cell migration, differentiation and the ability of glial cells to support neuronal neurite outgrowth. This chain is EGF-containing fibulin-like extracellular matrix protein 1 (EFEMP1), found in Macaca fascicularis (Crab-eating macaque).